The primary structure comprises 312 residues: Taste receptor type 2 member 140 (312 aa).

Over 1 to 9 (MKVTVECAL) the chain is Extracellular. The helical transmembrane segment at 10–30 (LITLIVEIIIGCLGNGFIAVV) threads the bilayer. The Cytoplasmic segment spans residues 31 to 46 (NIMDWTKRRRFSLVDQ). Residues 47 to 67 (ILTALAISRLAFVWSLLTVLV) traverse the membrane as a helical segment. Over 68-87 (ISELHSSLLITRKMLRIINN) the chain is Extracellular. A helical membrane pass occupies residues 88–108 (FWTVTNHFSIWLATCLSIFYF). The Cytoplasmic segment spans residues 109-133 (LKIANFSNSIFLSLRWRVKTVVSLT). A helical transmembrane segment spans residues 134 to 154 (LLVSLLLLLVNVIIINTCIVI). At 155 to 185 (SVEGYKVNMSYSSHFNNNPQISRIPLFTNTM) the chain is on the extracellular side. An N-linked (GlcNAc...) asparagine glycan is attached at Asn-162. The chain crosses the membrane as a helical span at residues 186–206 (FTFIPFTVTLTIFLLLIFSLW). Topologically, residues 207-229 (RHLKKMQHRAKGPRDPSTTAHIK) are cytoplasmic. The chain crosses the membrane as a helical span at residues 230–250 (ALQMVVTFLFLYTIFFLALVM). The Extracellular segment spans residues 251 to 264 (QAWNNEIQSKTVFN). Residues 265 to 285 (LVFESIALAFPSGHSCVLILG) traverse the membrane as a helical segment. The Cytoplasmic segment spans residues 286–312 (NSKLRQAFLTIIWWLRSSFNAAELSSP).

It belongs to the G-protein coupled receptor T2R family.

The protein localises to the membrane. Its function is as follows. Putative taste receptor which may play a role in the perception of bitterness. This is Taste receptor type 2 member 140 from Rattus norvegicus (Rat).